A 282-amino-acid chain; its full sequence is Short-chain dehydrogenase/reductase prx7 (282 aa).

Positions 23, 70, 150, 154, 183, and 185 each coordinate NADP(+). Catalysis depends on Tyr150, which acts as the Proton acceptor. The Lowers pKa of active site Tyr role is filled by Lys154.

It belongs to the short-chain dehydrogenases/reductases (SDR) family.

It participates in sesquiterpene biosynthesis. Its function is as follows. Short-chain dehydrogenase/reductase; part of the gene cluster that mediates the biosynthesis of PR-toxin, a bicyclic sesquiterpene belonging to the eremophilane class and acting as a mycotoxin. The first step of the pathway is catalyzed by the aristolochene synthase which performs the cyclization of trans,trans-farnesyl diphosphate (FPP) to the bicyclic sesquiterpene aristolochene. Following the formation of aristolochene, the non-oxygenated aristolochene is converted to the trioxygenated intermediate eremofortin B, via 7-epi-neopetasone. This conversion appears to involve three enzymes, a hydroxysterol oxidase-like enzyme, the quinone-oxidase prx3 that forms the quinone-type-structure in the bicyclic nucleus of aristolochene with the C8-oxo group and the C-3 hydroxyl group, and the P450 monooxygenase prx9 that introduces the epoxide at the double bond between carbons 1 and 2. No monoxy or dioxy-intermediates have been reported to be released to the broth, so these three early oxidative reactions may be coupled together. Eremofortin B is further oxidized by another P450 monooxygenase, that introduces a second epoxide between carbons 7 and 11 prior to acetylation to eremofortin A by the acetyltransferase prx11. The second epoxidation may be performed by a second P450 monooxygenase. After the acetylation step, eremofortin A is converted to eremofortin C and then to PR-toxin. First the conversion of eremofortin A to eremofortin C proceeds by oxidation of the side chain of the molecule at C-12 and is catalyzed by the short-chain oxidoreductase prx1. The cytochrome P450 monooxygenase prx8 also plays a role in this step. The primary alcohol formed at C-12 is finally oxidized by the short-chain alcohol dehydrogenase prx4 that forms PR-toxin. The sequence is that of Short-chain dehydrogenase/reductase prx7 from Penicillium rubens (strain ATCC 28089 / DSM 1075 / NRRL 1951 / Wisconsin 54-1255) (Penicillium chrysogenum).